The sequence spans 336 residues: tRNA-cytidine(32) 2-sulfurtransferase (336 aa).

The disordered stretch occupies residues 1 to 34; it reads MNAPEILNGAATASPADATEATQTAARAKTPLTR. Residues 10–22 show a composition bias toward low complexity; that stretch reads AATASPADATEAT. The PP-loop motif signature appears at 75 to 80; the sequence is SGGKDS. Cysteine 150, cysteine 153, and cysteine 241 together coordinate [4Fe-4S] cluster.

The protein belongs to the TtcA family. Homodimer. The cofactor is Mg(2+). It depends on [4Fe-4S] cluster as a cofactor.

Its subcellular location is the cytoplasm. It carries out the reaction cytidine(32) in tRNA + S-sulfanyl-L-cysteinyl-[cysteine desulfurase] + AH2 + ATP = 2-thiocytidine(32) in tRNA + L-cysteinyl-[cysteine desulfurase] + A + AMP + diphosphate + H(+). It participates in tRNA modification. Its function is as follows. Catalyzes the ATP-dependent 2-thiolation of cytidine in position 32 of tRNA, to form 2-thiocytidine (s(2)C32). The sulfur atoms are provided by the cysteine/cysteine desulfurase (IscS) system. This Paraburkholderia phytofirmans (strain DSM 17436 / LMG 22146 / PsJN) (Burkholderia phytofirmans) protein is tRNA-cytidine(32) 2-sulfurtransferase.